The primary structure comprises 172 residues: Adenine phosphoribosyltransferase (172 aa).

This sequence belongs to the purine/pyrimidine phosphoribosyltransferase family. Homodimer.

The protein resides in the cytoplasm. It catalyses the reaction AMP + diphosphate = 5-phospho-alpha-D-ribose 1-diphosphate + adenine. Its pathway is purine metabolism; AMP biosynthesis via salvage pathway; AMP from adenine: step 1/1. Catalyzes a salvage reaction resulting in the formation of AMP, that is energically less costly than de novo synthesis. This is Adenine phosphoribosyltransferase from Desulforamulus reducens (strain ATCC BAA-1160 / DSM 100696 / MI-1) (Desulfotomaculum reducens).